The chain runs to 355 residues: MPFLGQDWRSPGQSWVKTADGWKRFLDEKSGSFVSDLSSYCNKEVYSKENLFSSLNYDVAAKKRKKDIQNSKTKTQYFHQEKWIYVHKGSTKERHGYCTLGEAFNRLDFSTAILDSRRFNYVVRLLELIAKSQLTSLSGIAQKNFMNILEKVVLKVLEDQQNIRLIRELLQTLYTSLCTLVQRVGKSVLVGNINMWVYRMETILHWQQQLNSIQISRPAFKGLTITDLPVCLQLNIMQRLSDGRDLVSLGQAAPDLHVLSEDRLLWKRLCQYHFSERQIRKRLILSDKGQLDWKKMYFKLVRCYPRREQYGVTLQLCKHCHILSWKGTDHPCTANNPESCSVSLSPQDFINLFKF.

A Nuclear localization signal motif is present at residues 62–67 (KKRKKD). Positions 169-173 (LLQTL) match the Nuclear export signal motif. In terms of domain architecture, F-box spans 223 to 271 (LTITDLPVCLQLNIMQRLSDGRDLVSLGQAAPDLHVLSEDRLLWKRLCQ). Positions 280 to 295 (RKRLILSDKGQLDWKK) match the Bipartite nuclear localization signal motif.

As to quaternary structure, part of the SCF (SKP1-CUL1-F-box) E3 ubiquitin-protein ligase complex SCF(FBXO32) formed of CUL1, SKP1, RBX1 and FBXO32. In terms of tissue distribution, specifically expressed in cardiac and skeletal muscle.

It is found in the cytoplasm. The protein resides in the nucleus. Its pathway is protein modification; protein ubiquitination. Its function is as follows. Substrate recognition component of a SCF (SKP1-CUL1-F-box protein) E3 ubiquitin-protein ligase complex which mediates the ubiquitination and subsequent proteasomal degradation of target proteins. Probably recognizes and binds to phosphorylated target proteins during skeletal muscle atrophy. Recognizes TERF1. The sequence is that of F-box only protein 32 (Fbxo32) from Mus musculus (Mouse).